The chain runs to 179 residues: Cytochrome b6-f complex iron-sulfur subunit (179 aa).

A helical transmembrane segment spans residues 20-42 (LLTFGTITGVAAGALYPIVKYFI). One can recognise a Rieske domain in the interval 60–161 (GNDVIVSQFL…ANVTDNDKVV (102 aa)). 4 residues coordinate [2Fe-2S] cluster: cysteine 107, histidine 109, cysteine 125, and histidine 128. Cysteine 112 and cysteine 127 are joined by a disulfide.

It belongs to the Rieske iron-sulfur protein family. As to quaternary structure, the 4 large subunits of the cytochrome b6-f complex are cytochrome b6, subunit IV (17 kDa polypeptide, PetD), cytochrome f and the Rieske protein, while the 4 small subunits are PetG, PetL, PetM and PetN. The complex functions as a dimer. It depends on [2Fe-2S] cluster as a cofactor.

The protein localises to the cellular thylakoid membrane. The enzyme catalyses 2 oxidized [plastocyanin] + a plastoquinol + 2 H(+)(in) = 2 reduced [plastocyanin] + a plastoquinone + 4 H(+)(out). In terms of biological role, component of the cytochrome b6-f complex, which mediates electron transfer between photosystem II (PSII) and photosystem I (PSI), cyclic electron flow around PSI, and state transitions. The polypeptide is Cytochrome b6-f complex iron-sulfur subunit (Microcystis aeruginosa (strain NIES-843 / IAM M-2473)).